Consider the following 346-residue polypeptide: Ion-translocating oxidoreductase complex subunit D (346 aa).

4 helical membrane passes run 20 to 40, 42 to 62, 69 to 91, and 120 to 140; these read IMIQ…TFFG, GIII…GVVL, LASR…SLPP, and PFNP…VQMT. At Thr-187 the chain carries FMN phosphoryl threonine. 5 helical membrane-spanning segments follow: residues 212–232, 242–262, 264–284, 290–310, and 314–334; these read ASAG…YLIW, LSLL…APVV, APPL…FIAT, AATV…VWLI, and GGYP…VPLI.

It belongs to the NqrB/RnfD family. As to quaternary structure, the complex is composed of six subunits: RnfA, RnfB, RnfC, RnfD, RnfE and RnfG. It depends on FMN as a cofactor.

The protein localises to the cell inner membrane. Part of a membrane-bound complex that couples electron transfer with translocation of ions across the membrane. The chain is Ion-translocating oxidoreductase complex subunit D from Sodalis glossinidius (strain morsitans).